The sequence spans 570 residues: Proline--tRNA ligase (570 aa).

The protein belongs to the class-II aminoacyl-tRNA synthetase family. ProS type 1 subfamily. As to quaternary structure, homodimer.

The protein resides in the cytoplasm. It carries out the reaction tRNA(Pro) + L-proline + ATP = L-prolyl-tRNA(Pro) + AMP + diphosphate. Functionally, catalyzes the attachment of proline to tRNA(Pro) in a two-step reaction: proline is first activated by ATP to form Pro-AMP and then transferred to the acceptor end of tRNA(Pro). As ProRS can inadvertently accommodate and process non-cognate amino acids such as alanine and cysteine, to avoid such errors it has two additional distinct editing activities against alanine. One activity is designated as 'pretransfer' editing and involves the tRNA(Pro)-independent hydrolysis of activated Ala-AMP. The other activity is designated 'posttransfer' editing and involves deacylation of mischarged Ala-tRNA(Pro). The misacylated Cys-tRNA(Pro) is not edited by ProRS. The sequence is that of Proline--tRNA ligase from Thermoanaerobacter pseudethanolicus (strain ATCC 33223 / 39E) (Clostridium thermohydrosulfuricum).